Here is a 120-residue protein sequence, read N- to C-terminus: Immunoglobulin kappa variable 2D-26 (120 aa).

Residues 1–20 form the signal peptide; the sequence is MRLPAQLLGLLMLWVPGSSA. Residues 21–43 are framework-1; sequence EIVMTQTPLSLSITPGEQASMSC. One can recognise an Ig-like domain in the interval 21-120; that stretch reads EIVMTQTPLS…YYCMQDAQDP (100 aa). An intrachain disulfide couples Cys43 to Cys113. The interval 44–59 is complementarity-determining-1; sequence RSSQSLLHSDGYTYLY. Residues 60-74 form a framework-2 region; sequence WFLQKARPVSTLLIY. The complementarity-determining-2 stretch occupies residues 75-81; that stretch reads EVSNRFS. The framework-3 stretch occupies residues 82–113; that stretch reads GVPDRFSGSGSGTDFTLKISRVEAEDFGVYYC. The tract at residues 114–120 is complementarity-determining-3; sequence MQDAQDP.

As to quaternary structure, immunoglobulins are composed of two identical heavy chains and two identical light chains; disulfide-linked.

Its subcellular location is the secreted. It localises to the cell membrane. V region of the variable domain of immunoglobulin light chains that participates in the antigen recognition. Immunoglobulins, also known as antibodies, are membrane-bound or secreted glycoproteins produced by B lymphocytes. In the recognition phase of humoral immunity, the membrane-bound immunoglobulins serve as receptors which, upon binding of a specific antigen, trigger the clonal expansion and differentiation of B lymphocytes into immunoglobulins-secreting plasma cells. Secreted immunoglobulins mediate the effector phase of humoral immunity, which results in the elimination of bound antigens. The antigen binding site is formed by the variable domain of one heavy chain, together with that of its associated light chain. Thus, each immunoglobulin has two antigen binding sites with remarkable affinity for a particular antigen. The variable domains are assembled by a process called V-(D)-J rearrangement and can then be subjected to somatic hypermutations which, after exposure to antigen and selection, allow affinity maturation for a particular antigen. The protein is Immunoglobulin kappa variable 2D-26 of Homo sapiens (Human).